The primary structure comprises 442 residues: Serum response factor-binding protein 1 (442 aa).

2 coiled-coil regions span residues 55-77 and 118-140; these read EDAL…AMKE and LLKR…RQNA. Disordered regions lie at residues 137–336 and 358–442; these read RQNA…LETH and FHSL…TFDD. Basic and acidic residues-rich tracts occupy residues 149–159 and 167–188; these read ASKESQCEDIP and ESQH…DPTT. Residue Lys-202 forms a Glycyl lysine isopeptide (Lys-Gly) (interchain with G-Cter in SUMO2) linkage. Ser-215 carries the post-translational modification Phosphoserine. Residues 237–247 show a composition bias toward polar residues; sequence GNHSQGKASTR. Residues 266–278 show a composition bias toward acidic residues; sequence VSEEEKEYFDDST. Phosphoserine occurs at positions 277, 292, and 294. Lys-329 is covalently cross-linked (Glycyl lysine isopeptide (Lys-Gly) (interchain with G-Cter in SUMO2)). Ser-362 is subject to Phosphoserine. Residues 367-382 are compositionally biased toward basic and acidic residues; that stretch reads SRRDPREQAPKNKAPD.

In terms of assembly, interacts with SRF. Forms complexes with SRF and SRF cofactors ARID2, MYOCD and NKX2-5. Interacts with the N-terminus of SLC2A4.

It is found in the cytoplasm. The protein resides in the perinuclear region. May be involved in regulating transcriptional activation of cardiac genes during the aging process. May play a role in biosynthesis and/or processing of SLC2A4 in adipose cells. This chain is Serum response factor-binding protein 1, found in Rattus norvegicus (Rat).